A 997-amino-acid polypeptide reads, in one-letter code: Mannuronan C5-epimerase AlgE2 (997 aa).

7 PbH1 repeats span residues 133-155 (DRDV…DPHE), 157-179 (TINL…VADF), 180-202 (QIGG…NIVT), 204-226 (TNDF…VVQR), 257-279 (AHDV…RVYG), 280-315 (AEDV…GVSG), and 320-359 (TTGT…SVSN). 10 Hemolysin-type calcium-binding repeats span residues 388–403 (GTAG…AHET), 406–422 (GLDG…NDIL), 424–439 (GGAG…GADL), 557–573 (GHAG…DDIL), 574–591 (VGGA…ADVF), 696–711 (GSAG…ADEV), 713–730 (HGGG…ADVF), 828–839 (GGDGNDTLSGSS), 846–862 (GGVG…NDIL), and 864–880 (GGAG…SDIF).

It belongs to the D-mannuronate C5-epimerase family. Requires Ca(2+) as cofactor.

Its subcellular location is the secreted. The catalysed reaction is [(1-&gt;4)-beta-D-mannuronosyl](n) = [alginate](n). The protein operates within glycan biosynthesis; alginate biosynthesis. Its activity is regulated as follows. Inhibited by zinc. Functionally, converts beta-D-mannuronic acid (M) to alpha-L-guluronic acid (G), producing a polymer with gel-forming capacity, required for the formation of the cyst coat. The protein is Mannuronan C5-epimerase AlgE2 of Azotobacter vinelandii.